A 145-amino-acid chain; its full sequence is 3-hydroxyacyl-[acyl-carrier-protein] dehydratase FabZ (145 aa).

Residue His-51 is part of the active site.

The protein belongs to the thioester dehydratase family. FabZ subfamily.

Its subcellular location is the cytoplasm. The catalysed reaction is a (3R)-hydroxyacyl-[ACP] = a (2E)-enoyl-[ACP] + H2O. Functionally, involved in unsaturated fatty acids biosynthesis. Catalyzes the dehydration of short chain beta-hydroxyacyl-ACPs and long chain saturated and unsaturated beta-hydroxyacyl-ACPs. The polypeptide is 3-hydroxyacyl-[acyl-carrier-protein] dehydratase FabZ (Staphylococcus epidermidis (strain ATCC 35984 / DSM 28319 / BCRC 17069 / CCUG 31568 / BM 3577 / RP62A)).